The primary structure comprises 395 residues: Acetylornithine aminotransferase (395 aa).

Pyridoxal 5'-phosphate-binding positions include glycine 117–alanine 118 and phenylalanine 144. Arginine 147 lines the N(2)-acetyl-L-ornithine pocket. A pyridoxal 5'-phosphate-binding site is contributed by aspartate 230–glutamine 233. Position 259 is an N6-(pyridoxal phosphate)lysine (lysine 259). Serine 285 serves as a coordination point for N(2)-acetyl-L-ornithine. Residue threonine 286 participates in pyridoxal 5'-phosphate binding.

The protein belongs to the class-III pyridoxal-phosphate-dependent aminotransferase family. ArgD subfamily. Homodimer. The cofactor is pyridoxal 5'-phosphate.

The protein localises to the cytoplasm. The catalysed reaction is N(2)-acetyl-L-ornithine + 2-oxoglutarate = N-acetyl-L-glutamate 5-semialdehyde + L-glutamate. It participates in amino-acid biosynthesis; L-arginine biosynthesis; N(2)-acetyl-L-ornithine from L-glutamate: step 4/4. The protein is Acetylornithine aminotransferase of Methanosarcina acetivorans (strain ATCC 35395 / DSM 2834 / JCM 12185 / C2A).